Consider the following 430-residue polypeptide: Adenylosuccinate synthetase (430 aa).

Residues 12-18 (GDEGKGK) and 40-42 (GHT) contribute to the GTP site. Catalysis depends on aspartate 13, which acts as the Proton acceptor. Mg(2+) is bound by residues aspartate 13 and glycine 40. Residues 13–16 (DEGK), 38–41 (NAGH), threonine 130, arginine 144, glutamine 224, threonine 239, and arginine 303 contribute to the IMP site. Histidine 41 (proton donor) is an active-site residue. Position 299-305 (299-305 (TNTGRPR)) interacts with substrate. Residues arginine 305, 331–333 (KLD), and 413–415 (STS) contribute to the GTP site.

The protein belongs to the adenylosuccinate synthetase family. As to quaternary structure, homodimer. Mg(2+) serves as cofactor.

The protein resides in the cytoplasm. The catalysed reaction is IMP + L-aspartate + GTP = N(6)-(1,2-dicarboxyethyl)-AMP + GDP + phosphate + 2 H(+). It participates in purine metabolism; AMP biosynthesis via de novo pathway; AMP from IMP: step 1/2. In terms of biological role, plays an important role in the de novo pathway of purine nucleotide biosynthesis. Catalyzes the first committed step in the biosynthesis of AMP from IMP. In Rhodopseudomonas palustris (strain BisB5), this protein is Adenylosuccinate synthetase.